The chain runs to 218 residues: MNLIFLGPPGAGKGTYAKRVVEKYIIPHISTGDIFREAIAKGTELGRKVQDIVNSGNLVPDELTNALVEERLKQDDCKKGFILDGYPRTLNQAQALNEMLKKMGKELDGAIYFEVDEETVVQRISTRRVCSKCGKVYNVITLPSKVEGICDDCGGTLIQRDDDKEDIVRSRYRVYIEKTSPLIEYYKNQNKLFTLDGRKSVEEVMKILFNILGGFEKK.

10-15 contributes to the ATP binding site; the sequence is GAGKGT. Residues 30-59 form an NMP region; that stretch reads STGDIFREAIAKGTELGRKVQDIVNSGNLV. AMP contacts are provided by residues Thr31, Arg36, 57-59, 85-88, and Gln92; these read NLV and GYPR. The interval 126 to 163 is LID; the sequence is TRRVCSKCGKVYNVITLPSKVEGICDDCGGTLIQRDDD. ATP is bound at residue Arg127. Residues Cys130 and Cys133 each contribute to the Zn(2+) site. 136–137 is an ATP binding site; the sequence is VY. Zn(2+) contacts are provided by Cys150 and Cys153. Positions 160 and 171 each coordinate AMP. Lys199 contributes to the ATP binding site.

This sequence belongs to the adenylate kinase family. Monomer.

It is found in the cytoplasm. The enzyme catalyses AMP + ATP = 2 ADP. It functions in the pathway purine metabolism; AMP biosynthesis via salvage pathway; AMP from ADP: step 1/1. Catalyzes the reversible transfer of the terminal phosphate group between ATP and AMP. Plays an important role in cellular energy homeostasis and in adenine nucleotide metabolism. In Fervidobacterium nodosum (strain ATCC 35602 / DSM 5306 / Rt17-B1), this protein is Adenylate kinase.